The sequence spans 61 residues: MDPNCSCATGGSCTCAGSCKCKECKCTSCKKSCCSCCPVGCAKCAQGCVCKGASEKCSCCA.

Met1 is subject to N-acetylmethionine. Residues 1–29 (MDPNCSCATGGSCTCAGSCKCKECKCTSC) form a beta region. 20 residues coordinate a divalent metal cation: Cys5, Cys7, Cys13, Cys15, Cys19, Cys21, Cys24, Cys26, Cys29, Cys33, Cys34, Cys36, Cys37, Cys41, Cys44, Cys48, Cys50, Cys57, Cys59, and Cys60. Positions 30 to 61 (KKSCCSCCPVGCAKCAQGCVCKGASEKCSCCA) are alpha.

The protein belongs to the metallothionein superfamily. Type 1 family. Monomer.

Metallothioneins have a high content of cysteine residues that bind various heavy metals; these proteins are transcriptionally regulated by both heavy metals and glucocorticoids. This is Metallothionein-1E (MT1E) from Homo sapiens (Human).